Here is a 233-residue protein sequence, read N- to C-terminus: 2-C-methyl-D-erythritol 4-phosphate cytidylyltransferase (233 aa).

It belongs to the IspD/TarI cytidylyltransferase family. IspD subfamily.

It catalyses the reaction 2-C-methyl-D-erythritol 4-phosphate + CTP + H(+) = 4-CDP-2-C-methyl-D-erythritol + diphosphate. Its pathway is isoprenoid biosynthesis; isopentenyl diphosphate biosynthesis via DXP pathway; isopentenyl diphosphate from 1-deoxy-D-xylulose 5-phosphate: step 2/6. In terms of biological role, catalyzes the formation of 4-diphosphocytidyl-2-C-methyl-D-erythritol from CTP and 2-C-methyl-D-erythritol 4-phosphate (MEP). In Syntrophotalea carbinolica (strain DSM 2380 / NBRC 103641 / GraBd1) (Pelobacter carbinolicus), this protein is 2-C-methyl-D-erythritol 4-phosphate cytidylyltransferase.